A 51-amino-acid chain; its full sequence is Insulin (51 aa).

3 disulfides stabilise this stretch: cysteine 7-cysteine 36, cysteine 19-cysteine 49, and cysteine 35-cysteine 40.

Belongs to the insulin family. In terms of assembly, heterodimer of a B chain and an A chain linked by two disulfide bonds.

It is found in the secreted. Insulin decreases blood glucose concentration. It increases cell permeability to monosaccharides, amino acids and fatty acids. It accelerates glycolysis, the pentose phosphate cycle, and glycogen synthesis in liver. The sequence is that of Insulin (INS) from Myocastor coypus (Coypu).